A 290-amino-acid polypeptide reads, in one-letter code: tRNA (adenine(58)-N(1))-methyltransferase catalytic subunit TRMT61A (290 aa).

The residue at position 2 (S2) is an N-acetylserine. Substrate stretches follow at residues 20–22 (LGH), 35–42 (QTQTRHGV), 64–65 (GW), 85–89 (QILYS), and 110–117 (SGTGSGSV). Residues L87, 114 to 116 (SGS), E135, R140, 163 to 164 (DV), and D181 each bind S-adenosyl-L-methionine. Substrate stretches follow at residues 180-183 (LDIP) and 205-212 (SFSPCIEQ). Substrate is bound at residue T279.

It belongs to the class I-like SAM-binding methyltransferase superfamily. TRM61 family. As to quaternary structure, heterotetramer; composed of two copies of TRMT6 and two copies of TRMT61A.

Its subcellular location is the nucleus. It carries out the reaction adenosine(58) in tRNA + S-adenosyl-L-methionine = N(1)-methyladenosine(58) in tRNA + S-adenosyl-L-homocysteine + H(+). The enzyme catalyses an adenosine in mRNA + S-adenosyl-L-methionine = an N(1)-methyladenosine in mRNA + S-adenosyl-L-homocysteine + H(+). Catalytic subunit of tRNA (adenine-N(1)-)-methyltransferase, which catalyzes the formation of N(1)-methyladenine at position 58 (m1A58) in initiator methionyl-tRNA. Catalytic subunit of mRNA N(1)-methyltransferase complex, which mediates methylation of adenosine residues at the N(1) position of a small subset of mRNAs: N(1) methylation takes place in tRNA T-loop-like structures of mRNAs and is only present at low stoichiometries. The polypeptide is tRNA (adenine(58)-N(1))-methyltransferase catalytic subunit TRMT61A (Trmt61a) (Rattus norvegicus (Rat)).